Consider the following 357-residue polypeptide: UDP-N-acetylglucosamine--N-acetylmuramyl-(pentapeptide) pyrophosphoryl-undecaprenol N-acetylglucosamine transferase (357 aa).

UDP-N-acetyl-alpha-D-glucosamine is bound by residues 13–15, N125, R161, S189, I243, and Q288; that span reads TGG.

The protein belongs to the glycosyltransferase 28 family. MurG subfamily.

The protein localises to the cell inner membrane. The catalysed reaction is di-trans,octa-cis-undecaprenyl diphospho-N-acetyl-alpha-D-muramoyl-L-alanyl-D-glutamyl-meso-2,6-diaminopimeloyl-D-alanyl-D-alanine + UDP-N-acetyl-alpha-D-glucosamine = di-trans,octa-cis-undecaprenyl diphospho-[N-acetyl-alpha-D-glucosaminyl-(1-&gt;4)]-N-acetyl-alpha-D-muramoyl-L-alanyl-D-glutamyl-meso-2,6-diaminopimeloyl-D-alanyl-D-alanine + UDP + H(+). Its pathway is cell wall biogenesis; peptidoglycan biosynthesis. In terms of biological role, cell wall formation. Catalyzes the transfer of a GlcNAc subunit on undecaprenyl-pyrophosphoryl-MurNAc-pentapeptide (lipid intermediate I) to form undecaprenyl-pyrophosphoryl-MurNAc-(pentapeptide)GlcNAc (lipid intermediate II). The polypeptide is UDP-N-acetylglucosamine--N-acetylmuramyl-(pentapeptide) pyrophosphoryl-undecaprenol N-acetylglucosamine transferase (Bordetella pertussis (strain Tohama I / ATCC BAA-589 / NCTC 13251)).